The chain runs to 238 residues: Chromosome partition protein MukE (238 aa).

The segment at 206 to 238 (EESSQSSFDLDENEKLSDISAEEQHELELEGDA) is disordered. The span at 218–238 (NEKLSDISAEEQHELELEGDA) shows a compositional bias: basic and acidic residues.

It belongs to the MukE family. Interacts, and probably forms a ternary complex, with MukF and MukB. The complex formation is stimulated by calcium or magnesium.

The protein resides in the cytoplasm. The protein localises to the nucleoid. Involved in chromosome condensation, segregation and cell cycle progression. May participate in facilitating chromosome segregation by condensation DNA from both sides of a centrally located replisome during cell division. Probably acts via its interaction with MukB and MukF. This chain is Chromosome partition protein MukE, found in Aliivibrio salmonicida (strain LFI1238) (Vibrio salmonicida (strain LFI1238)).